A 185-amino-acid chain; its full sequence is Ribosome-recycling factor (185 aa).

The segment at 137-159 is disordered; it reads EDLKADEKAKDISEDDRKRMEDE.

Belongs to the RRF family.

Its subcellular location is the cytoplasm. Functionally, responsible for the release of ribosomes from messenger RNA at the termination of protein biosynthesis. May increase the efficiency of translation by recycling ribosomes from one round of translation to another. The sequence is that of Ribosome-recycling factor from Erythrobacter litoralis (strain HTCC2594).